Consider the following 39-residue polypeptide: Protein MchX (39 aa).

The helical transmembrane segment at Ser-15–Ser-37 threads the bilayer.

The protein localises to the cell inner membrane. Functionally, required for microcin H47 production. Possibly involved in a regulatory loop modulating its own expression and that of MchI and MchB. This chain is Protein MchX (mchX), found in Escherichia coli.